Reading from the N-terminus, the 929-residue chain is Band 4.1-like protein 3 (929 aa).

Met-1 bears the N-acetylmethionine mark. A disordered region spans residues 1-72 (MTTESGSDSE…STPVKREIGD (72 aa)). Thr-2 carries the N-acetylthreonine; in Band 4.1-like protein 3, N-terminally processed modification. Low complexity predominate over residues 20–33 (QEAAGPQGQAGAQP). A Phosphoserine modification is found at Ser-96. Positions 118 to 399 (MQCKVTLLDG…EHHTFFRLLL (282 aa)) constitute an FERM domain. Residues 402–528 (APPKKFLTLG…PVTALRHEGK (127 aa)) form a hydrophilic region. Ser-428, Ser-451, and Ser-486 each carry phosphoserine. The interval 490-554 (LITTVTPEKK…TESDQEEDAE (65 aa)) is disordered. Position 495 is a phosphothreonine (Thr-495). Basic and acidic residues predominate over residues 496-516 (PEKKAEEERVEEEDRRKKAEE). Position 518 is a phosphothreonine (Thr-518). Basic and acidic residues predominate over residues 523-536 (LRHEGKTDSERTDT). Residues His-525 and Ser-543 each carry the phosphoserine modification. Phosphothreonine is present on Thr-545. Residue Ser-547 is modified to Phosphoserine. Residues 559–602 (DLDKTQDELMKHQTNISELKRTFLETSTETALTNEWEKRLSTSP) are spectrin--actin-binding. 3 disordered regions span residues 608–630 (RQED…SGEK), 665–689 (LETK…STEK), and 705–807 (VHAS…SPGG). A Phosphothreonine modification is found at Thr-725. Over residues 726-737 (PTDRRHTGKGKE) the composition is skewed to basic and acidic residues. The interval 777–929 (RTSEGLEQKS…TEITPEDGED (153 aa)) is C-terminal (CTD). Positions 789–802 (ESSTVRVESTSVGS) are enriched in low complexity. Ser-802 and Ser-804 each carry phosphoserine. At Thr-923 the chain carries Phosphothreonine.

As to quaternary structure, interacts (via FERM domain) with CADM1. Interacts (via FERM domain) with PRMT3; the interaction is direct and inhibits the protein-arginine N-methyltransferase activity of PRMT3. Interacts with PRMT5. Interacts with PRMT6. In terms of assembly, has the complete spectrin--actin-binding (SAB) domain and fully interacts with spectrin and actin. In terms of tissue distribution, detected in brain (at protein level). Highest expression in brain, lower in testis, adrenal gland, heart and kidney. Also present in muscle and epithelial cells. Isoform 1 is expressed in brain, isoform 2 is expressed in heart and isoform 3 is mostly expressed in kidney but also in heart and brain. Isoform 6 seems to be most abundant in kidney while isoform 4 and isoform 5 are predominantly expressed in heart and brain.

Its subcellular location is the cytoplasm. The protein resides in the cytoskeleton. It localises to the cell membrane. The protein localises to the cell junction. In terms of biological role, tumor suppressor that inhibits cell proliferation and promotes apoptosis. Modulates the activity of protein arginine N-methyltransferases, including PRMT3 and PRMT5. The chain is Band 4.1-like protein 3 from Mus musculus (Mouse).